We begin with the raw amino-acid sequence, 185 residues long: uncharacterized protein (185 aa).

5 helical membrane passes run 4–24, 54–74, 98–118, 119–139, and 153–173; these read TYLTGYFPLIAILLFSSSLSI, LALFAAFALLYFMVLSALKLI, LRMGSMIYLGGGILSFVLLQN, VIWIVIWFAVVTLAYFVFTVY, and FILLELLFWFTFVIGILFIFI.

The protein localises to the cell membrane. This is an uncharacterized protein from Bacillus subtilis (strain 168).